The chain runs to 168 residues: Urease accessory protein UreE (168 aa).

The disordered stretch occupies residues 137–168; sequence PESGAYHGTTGHGGGHSHSHGHSHDHHHDHSH. Over residues 151–161 the composition is skewed to basic residues; it reads GHSHSHGHSHD.

Belongs to the UreE family.

The protein localises to the cytoplasm. Its function is as follows. Involved in urease metallocenter assembly. Binds nickel. Probably functions as a nickel donor during metallocenter assembly. The chain is Urease accessory protein UreE from Saccharophagus degradans (strain 2-40 / ATCC 43961 / DSM 17024).